We begin with the raw amino-acid sequence, 430 residues long: Glutamate-1-semialdehyde 2,1-aminomutase (430 aa).

Lysine 270 carries the N6-(pyridoxal phosphate)lysine modification.

This sequence belongs to the class-III pyridoxal-phosphate-dependent aminotransferase family. HemL subfamily. Homodimer. Requires pyridoxal 5'-phosphate as cofactor.

It localises to the cytoplasm. It carries out the reaction (S)-4-amino-5-oxopentanoate = 5-aminolevulinate. It participates in porphyrin-containing compound metabolism; protoporphyrin-IX biosynthesis; 5-aminolevulinate from L-glutamyl-tRNA(Glu): step 2/2. In Cupriavidus necator (strain ATCC 17699 / DSM 428 / KCTC 22496 / NCIMB 10442 / H16 / Stanier 337) (Ralstonia eutropha), this protein is Glutamate-1-semialdehyde 2,1-aminomutase.